The primary structure comprises 979 residues: Glycine dehydrogenase (decarboxylating) (979 aa).

Lysine 724 bears the N6-(pyridoxal phosphate)lysine mark.

This sequence belongs to the GcvP family. The glycine cleavage system is composed of four proteins: P, T, L and H. Pyridoxal 5'-phosphate is required as a cofactor.

It carries out the reaction N(6)-[(R)-lipoyl]-L-lysyl-[glycine-cleavage complex H protein] + glycine + H(+) = N(6)-[(R)-S(8)-aminomethyldihydrolipoyl]-L-lysyl-[glycine-cleavage complex H protein] + CO2. Functionally, the glycine cleavage system catalyzes the degradation of glycine. The P protein binds the alpha-amino group of glycine through its pyridoxal phosphate cofactor; CO(2) is released and the remaining methylamine moiety is then transferred to the lipoamide cofactor of the H protein. The chain is Glycine dehydrogenase (decarboxylating) from Nostoc punctiforme (strain ATCC 29133 / PCC 73102).